The primary structure comprises 118 residues: MTKNIHDVAYELQKAIAENDDFKTLKESYAAVQADAASKNLFDEFRTMQLSLQQKMMQGQEITEEDNQQAQEVVVRIQQDAKITKLMETEQRLNVVIGDVNKIIMKPLEELYSAQQQV.

It belongs to the UPF0342 family.

This Bacillus anthracis (strain CDC 684 / NRRL 3495) protein is UPF0342 protein BAMEG_3696.